A 338-amino-acid polypeptide reads, in one-letter code: Glyceraldehyde-3-phosphate dehydrogenase (338 aa).

NAD(+)-binding positions include 12-13, Asp-38, and Ser-125; that span reads RI. D-glyceraldehyde 3-phosphate is bound by residues 155 to 157, Thr-186, 216 to 217, and Arg-239; these read SCT and TG. Catalysis depends on Cys-156, which acts as the Nucleophile. Asn-320 is a binding site for NAD(+).

Belongs to the glyceraldehyde-3-phosphate dehydrogenase family. In terms of assembly, homotetramer.

It localises to the cytoplasm. The catalysed reaction is D-glyceraldehyde 3-phosphate + phosphate + NAD(+) = (2R)-3-phospho-glyceroyl phosphate + NADH + H(+). Its pathway is carbohydrate degradation; glycolysis; pyruvate from D-glyceraldehyde 3-phosphate: step 1/5. Its function is as follows. Catalyzes the oxidative phosphorylation of glyceraldehyde 3-phosphate (G3P) to 1,3-bisphosphoglycerate (BPG) using the cofactor NAD. The first reaction step involves the formation of a hemiacetal intermediate between G3P and a cysteine residue, and this hemiacetal intermediate is then oxidized to a thioester, with concomitant reduction of NAD to NADH. The reduced NADH is then exchanged with the second NAD, and the thioester is attacked by a nucleophilic inorganic phosphate to produce BPG. The chain is Glyceraldehyde-3-phosphate dehydrogenase (gap) from Lactobacillus delbrueckii subsp. bulgaricus.